Reading from the N-terminus, the 339-residue chain is Glycerol-3-phosphate dehydrogenase [NAD(P)+] (339 aa).

The NADPH site is built by S15, W16, H36, and K110. The sn-glycerol 3-phosphate site is built by K110, G144, and S146. A148 contacts NADPH. Residues K199, D252, S262, R263, and N264 each coordinate sn-glycerol 3-phosphate. K199 serves as the catalytic Proton acceptor. Position 263 (R263) interacts with NADPH. V287 and E289 together coordinate NADPH.

Belongs to the NAD-dependent glycerol-3-phosphate dehydrogenase family.

It is found in the cytoplasm. The catalysed reaction is sn-glycerol 3-phosphate + NAD(+) = dihydroxyacetone phosphate + NADH + H(+). It catalyses the reaction sn-glycerol 3-phosphate + NADP(+) = dihydroxyacetone phosphate + NADPH + H(+). The protein operates within membrane lipid metabolism; glycerophospholipid metabolism. In terms of biological role, catalyzes the reduction of the glycolytic intermediate dihydroxyacetone phosphate (DHAP) to sn-glycerol 3-phosphate (G3P), the key precursor for phospholipid synthesis. The sequence is that of Glycerol-3-phosphate dehydrogenase [NAD(P)+] from Desulfotalea psychrophila (strain LSv54 / DSM 12343).